The chain runs to 486 residues: tRNA-2-methylthio-N(6)-dimethylallyladenosine synthase (486 aa).

An MTTase N-terminal domain is found at 35–151 (RNLYVESYGC…LPRLLATVDS (117 aa)). [4Fe-4S] cluster is bound by residues cysteine 44, cysteine 80, cysteine 114, cysteine 189, cysteine 193, and cysteine 196. Residues 175-419 (NSNGVSAFIS…IDKQRQHSFE (245 aa)) form the Radical SAM core domain. One can recognise a TRAM domain in the interval 422–485 (LKDIGKVYQV…TGTLLGEICT (64 aa)).

Belongs to the methylthiotransferase family. MiaB subfamily. As to quaternary structure, monomer. [4Fe-4S] cluster serves as cofactor.

Its subcellular location is the cytoplasm. The enzyme catalyses N(6)-dimethylallyladenosine(37) in tRNA + (sulfur carrier)-SH + AH2 + 2 S-adenosyl-L-methionine = 2-methylsulfanyl-N(6)-dimethylallyladenosine(37) in tRNA + (sulfur carrier)-H + 5'-deoxyadenosine + L-methionine + A + S-adenosyl-L-homocysteine + 2 H(+). In terms of biological role, catalyzes the methylthiolation of N6-(dimethylallyl)adenosine (i(6)A), leading to the formation of 2-methylthio-N6-(dimethylallyl)adenosine (ms(2)i(6)A) at position 37 in tRNAs that read codons beginning with uridine. The protein is tRNA-2-methylthio-N(6)-dimethylallyladenosine synthase of Amoebophilus asiaticus (strain 5a2).